A 442-amino-acid polypeptide reads, in one-letter code: tRNA modification GTPase MnmE (442 aa).

(6S)-5-formyl-5,6,7,8-tetrahydrofolate is bound by residues arginine 27, glutamate 84, and lysine 124. The TrmE-type G domain occupies glycine 221–glutamate 366. Residues asparagine 231–serine 236, serine 250–threonine 256, and aspartate 275–glycine 278 each bind GTP. Positions 235 and 256 each coordinate Mg(2+). Residue lysine 442 coordinates (6S)-5-formyl-5,6,7,8-tetrahydrofolate.

Belongs to the TRAFAC class TrmE-Era-EngA-EngB-Septin-like GTPase superfamily. TrmE GTPase family. As to quaternary structure, homodimer. Heterotetramer of two MnmE and two MnmG subunits. K(+) is required as a cofactor.

The protein resides in the cytoplasm. Exhibits a very high intrinsic GTPase hydrolysis rate. Involved in the addition of a carboxymethylaminomethyl (cmnm) group at the wobble position (U34) of certain tRNAs, forming tRNA-cmnm(5)s(2)U34. This Brucella melitensis biotype 1 (strain ATCC 23456 / CCUG 17765 / NCTC 10094 / 16M) protein is tRNA modification GTPase MnmE.